We begin with the raw amino-acid sequence, 139 residues long: MANAASGMAVDDECKLKFLELKAKRTYRFIIYKIDEKKKMVVVEKVGEPVLNYDDFAASLPANECRYAIFDYDFVTEENCQKSKIFFIAWSPDTSRVRSKMIYASSKDRFKRELDGIQVELQATDPTEVGLDVIRGRAN.

The 133-residue stretch at 7–139 folds into the ADF-H domain; that stretch reads GMAVDDECKL…GLDVIRGRAN (133 aa).

It belongs to the actin-binding proteins ADF family.

Its function is as follows. Actin-depolymerizing protein. Severs actin filaments (F-actin) and binds to actin monomers. The sequence is that of Actin-depolymerizing factor 7 (ADF7) from Oryza sativa subsp. japonica (Rice).